A 335-amino-acid chain; its full sequence is MLLIGVAGTELTAQERDWLQHDAVAGVVLFKRNFASRQQVTDLSAAIRAAAPRPQLICVDQEGGRVQRFREGYSELPPLQDIGALYATDPQQALALAEQHAWLMASEVRASGLDLSFAPVVDLGRGNRAIGNRAFSEDPQVVAAFTAAYVRGMHAVGMAATLKHFPGHGTVLEDTHVDTAIDPRALDELRAQDLVPFQAGIAAGADAVMMAHVVYPQVAPEPAGYSPRWIQDILRGELGFRGVVFSDDIGMAASHSAGGVPARVHAHLDAGCDVVLVCHPELVDEALHAVQGRSLNTAALLGLLGRGALGWDGLLADARHGDTQSHLLETLGRTV.

Substrate-binding positions include D60, R68, R133, and 163-164 (KH). The active-site Proton donor/acceptor is H176. D247 acts as the Nucleophile in catalysis.

It belongs to the glycosyl hydrolase 3 family. NagZ subfamily.

It localises to the cytoplasm. The catalysed reaction is Hydrolysis of terminal non-reducing N-acetyl-D-hexosamine residues in N-acetyl-beta-D-hexosaminides.. It functions in the pathway cell wall biogenesis; peptidoglycan recycling. Functionally, plays a role in peptidoglycan recycling by cleaving the terminal beta-1,4-linked N-acetylglucosamine (GlcNAc) from peptide-linked peptidoglycan fragments, giving rise to free GlcNAc, anhydro-N-acetylmuramic acid and anhydro-N-acetylmuramic acid-linked peptides. The polypeptide is Beta-hexosaminidase (Stenotrophomonas maltophilia (strain R551-3)).